Here is a 432-residue protein sequence, read N- to C-terminus: Glutamate-1-semialdehyde 2,1-aminomutase 2 (432 aa).

Lys268 is modified (N6-(pyridoxal phosphate)lysine).

It belongs to the class-III pyridoxal-phosphate-dependent aminotransferase family. HemL subfamily. As to quaternary structure, homodimer. The cofactor is pyridoxal 5'-phosphate.

The protein localises to the cytoplasm. It catalyses the reaction (S)-4-amino-5-oxopentanoate = 5-aminolevulinate. The protein operates within porphyrin-containing compound metabolism; protoporphyrin-IX biosynthesis; 5-aminolevulinate from L-glutamyl-tRNA(Glu): step 2/2. In Listeria monocytogenes serotype 4b (strain F2365), this protein is Glutamate-1-semialdehyde 2,1-aminomutase 2.